A 113-amino-acid polypeptide reads, in one-letter code: Protein translation factor SUI1 homolog 1 (113 aa).

A disordered region spans residues 1 to 24 (MSELDSQVPTAFDPFADANAEDSG). S2 is subject to N-acetylserine.

The protein belongs to the SUI1 family.

Its function is as follows. Probably involved in translation. In Arabidopsis thaliana (Mouse-ear cress), this protein is Protein translation factor SUI1 homolog 1.